Reading from the N-terminus, the 347-residue chain is Heat-inducible transcription repressor HrcA (347 aa).

The protein belongs to the HrcA family.

In terms of biological role, negative regulator of class I heat shock genes (grpE-dnaK-dnaJ and groELS operons). Prevents heat-shock induction of these operons. In Lactococcus lactis subsp. lactis (strain IL1403) (Streptococcus lactis), this protein is Heat-inducible transcription repressor HrcA.